Here is a 78-residue protein sequence, read N- to C-terminus: NAD(P)H-quinone oxidoreductase subunit O (78 aa).

The protein belongs to the complex I NdhO subunit family. NDH-1 can be composed of about 15 different subunits; different subcomplexes with different compositions have been identified which probably have different functions.

It is found in the cellular thylakoid membrane. The catalysed reaction is a plastoquinone + NADH + (n+1) H(+)(in) = a plastoquinol + NAD(+) + n H(+)(out). The enzyme catalyses a plastoquinone + NADPH + (n+1) H(+)(in) = a plastoquinol + NADP(+) + n H(+)(out). In terms of biological role, NDH-1 shuttles electrons from an unknown electron donor, via FMN and iron-sulfur (Fe-S) centers, to quinones in the respiratory and/or the photosynthetic chain. The immediate electron acceptor for the enzyme in this species is believed to be plastoquinone. Couples the redox reaction to proton translocation, and thus conserves the redox energy in a proton gradient. Cyanobacterial NDH-1 also plays a role in inorganic carbon-concentration. This Prochlorococcus marinus (strain MIT 9312) protein is NAD(P)H-quinone oxidoreductase subunit O.